Consider the following 368-residue polypeptide: MSNPTSTPRADGFRMPAEWEPHEQTWMVWPERPDNWRNGGKPAQAAFAAVAKAIARFEPVTVCASAGQYENARARLDDGNIRVVEISSDDAWVRDTGPTFVIDDKGDVRGVDWGFNAWGGFEGGLYFPWQRDDQVARKILEIERRARYRTDDFVLEGGSIHVDGEGTLITTEECLLNHNRNPHLSQVEIERTLRDYLAVDSIIWLPNGLYNDETDGHVDNFCCYVRPGEVLLAWTDDQDDPNYLRCQAALRVLEESRDAKGRKLVVHKMPIPGPLYATQEECDGVDIVEGSQPRDPSIRLAGSYVNFLIVNGGIVAPSFDDPKDAEARAILQRVFPEHEVVMVPGREILLGGGNIHCITQQQPAPRKA.

The active-site Amidino-cysteine intermediate is the cysteine 357.

The protein belongs to the agmatine deiminase family. Homodimer.

It carries out the reaction agmatine + H2O = N-carbamoylputrescine + NH4(+). The protein operates within amine and polyamine biosynthesis; putrescine biosynthesis via agmatine pathway; N-carbamoylputrescine from agmatine: step 1/1. Its function is as follows. Mediates the hydrolysis of agmatine into N-carbamoylputrescine in the arginine decarboxylase (ADC) pathway of putrescine biosynthesis, a basic polyamine. The polypeptide is Agmatine deiminase (Pseudomonas aeruginosa (strain UCBPP-PA14)).